We begin with the raw amino-acid sequence, 338 residues long: Lipoyl synthase (338 aa).

The segment at 1–24 (MTTVQEAVPNLIPTQDATPRPAPK) is disordered. The [4Fe-4S] cluster site is built by Cys-84, Cys-89, Cys-95, Cys-110, Cys-114, Cys-117, and Ser-324. The region spanning 96 to 313 (FSGGTATFMI…AEEGYKMGFK (218 aa)) is the Radical SAM core domain.

This sequence belongs to the radical SAM superfamily. Lipoyl synthase family. It depends on [4Fe-4S] cluster as a cofactor.

It is found in the cytoplasm. The catalysed reaction is [[Fe-S] cluster scaffold protein carrying a second [4Fe-4S](2+) cluster] + N(6)-octanoyl-L-lysyl-[protein] + 2 oxidized [2Fe-2S]-[ferredoxin] + 2 S-adenosyl-L-methionine + 4 H(+) = [[Fe-S] cluster scaffold protein] + N(6)-[(R)-dihydrolipoyl]-L-lysyl-[protein] + 4 Fe(3+) + 2 hydrogen sulfide + 2 5'-deoxyadenosine + 2 L-methionine + 2 reduced [2Fe-2S]-[ferredoxin]. The protein operates within protein modification; protein lipoylation via endogenous pathway; protein N(6)-(lipoyl)lysine from octanoyl-[acyl-carrier-protein]: step 2/2. Catalyzes the radical-mediated insertion of two sulfur atoms into the C-6 and C-8 positions of the octanoyl moiety bound to the lipoyl domains of lipoate-dependent enzymes, thereby converting the octanoylated domains into lipoylated derivatives. The sequence is that of Lipoyl synthase from Pseudomonas putida (strain W619).